The chain runs to 509 residues: Activin receptor type-1 (509 aa).

Residues 1–20 form the signal peptide; the sequence is MVDGVMILPVLMMMAFPSPS. Topologically, residues 21-123 are extracellular; that stretch reads VEDEKPKVNQ…FPGTQNFHLE (103 aa). An N-linked (GlcNAc...) asparagine glycan is attached at Asn102. Residues 124-146 form a helical membrane-spanning segment; it reads VGLIILSVVFAVCLLACILGVAL. At 147 to 509 the chain is on the cytoplasmic side; it reads RKFKRRNQER…NSLDKLKTDC (363 aa). The GS domain maps to 178 to 207; the sequence is STLAELLDHSCTSGSGSGLPFLVQRTVARQ. The Protein kinase domain occupies 208–502; that stretch reads ITLLECVGKG…KTLTKIDNSL (295 aa). ATP contacts are provided by residues 214 to 222 and Lys235; that span reads VGKGRYGEV. Catalysis depends on Asp336, which acts as the Proton acceptor. Residue Ser501 is modified to Phosphoserine.

Belongs to the protein kinase superfamily. TKL Ser/Thr protein kinase family. TGFB receptor subfamily. Interacts with FKBP1A. Interacts with FCHO1. Interacts with CLU. Interacts with type II receptors AMHR2 and ACVR2A. Interacts with BMP7. Interacts with BMP9. Interacts with BMP6 (when glycosylated); the interaction may induce HAMP expression. Interacts with TSC22D1/TSC-22. Mg(2+) is required as a cofactor. Requires Mn(2+) as cofactor. In terms of tissue distribution, highly expressed in bone during developmental stages. Expressed in normal parenchymal cells, endothelial cells, fibroblasts and tumor-derived epithelial cells.

It localises to the membrane. It catalyses the reaction L-threonyl-[receptor-protein] + ATP = O-phospho-L-threonyl-[receptor-protein] + ADP + H(+). It carries out the reaction L-seryl-[receptor-protein] + ATP = O-phospho-L-seryl-[receptor-protein] + ADP + H(+). Functionally, bone morphogenetic protein (BMP) type I receptor that is involved in a wide variety of biological processes, including bone, heart, cartilage, nervous, and reproductive system development and regulation. As a type I receptor, forms heterotetrameric receptor complexes with the type II receptors AMHR2, ACVR2A ors ACVR2B. Upon binding of ligands such as BMP7 or BMP9 to the heteromeric complexes, type II receptors transphosphorylate ACVR1 intracellular domain. In turn, ACVR1 kinase domain is activated and subsequently phosphorylates SMAD1/5/8 proteins that transduce the signal. In addition to its role in mediating BMP pathway-specific signaling, suppresses TGFbeta/activin pathway signaling by interfering with the binding of activin to its type II receptor. Besides canonical SMAD signaling, can activate non-canonical pathways such as p38 mitogen-activated protein kinases/MAPKs. May promote the expression of HAMP, potentially via its interaction with BMP6. In Mus musculus (Mouse), this protein is Activin receptor type-1 (Acvr1).